The sequence spans 225 residues: Two-component response regulator ARR8 (225 aa).

Residues 10–145 (HVLAVDDSLF…DLTKLKPHMM (136 aa)) form the Response regulatory domain. Position 78 is a 4-aspartylphosphate (aspartate 78).

It belongs to the ARR family. Type-A subfamily. Two-component system major event consists of a His-to-Asp phosphorelay between a sensor histidine kinase (HK) and a response regulator (RR). In plants, the His-to-Asp phosphorelay involves an additional intermediate named Histidine-containing phosphotransfer protein (HPt). This multistep phosphorelay consists of a His-Asp-His-Asp sequential transfer of a phosphate group between first a His and an Asp of the HK protein, followed by the transfer to a conserved His of the HPt protein and finally the transfer to an Asp in the receiver domain of the RR protein. In terms of tissue distribution, predominantly expressed in roots.

The protein localises to the nucleus. Functionally, functions as a response regulator involved in His-to-Asp phosphorelay signal transduction system. Phosphorylation of the Asp residue in the receiver domain activates the ability of the protein to promote the transcription of target genes. Type-A response regulators seem to act as negative regulators of the cytokinin signaling. The polypeptide is Two-component response regulator ARR8 (ARR8) (Arabidopsis thaliana (Mouse-ear cress)).